The chain runs to 64 residues: Enteric beta-defensin (64 aa).

A signal peptide spans 1–26; sequence MRLHHLLLTLLFLVLSAGSGFTQGIS. Disulfide bonds link C31–C60, C38–C53, and C43–C61.

The protein belongs to the beta-defensin family. LAP/TAP subfamily. In terms of tissue distribution, inducibly expressed in enteric epithelial cells.

The protein resides in the secreted. In terms of biological role, has antibacterial activity. This is Enteric beta-defensin (EBD) from Bos taurus (Bovine).